Here is a 1103-residue protein sequence, read N- to C-terminus: Mediator of RNA polymerase II transcription subunit 14 (1103 aa).

Disordered stretches follow at residues 22-61 (LNGV…GSDE) and 1043-1067 (TTPK…PAIR). A compositionally biased stretch (polar residues) spans 23-36 (NGVSSAPAGSSQLG).

It belongs to the Mediator complex subunit 14 family. Component of the Mediator complex.

It localises to the nucleus. Functionally, component of the Mediator complex, a coactivator involved in the regulated transcription of nearly all RNA polymerase II-dependent genes. Mediator functions as a bridge to convey information from gene-specific regulatory proteins to the basal RNA polymerase II transcription machinery. Mediator is recruited to promoters by direct interactions with regulatory proteins and serves as a scaffold for the assembly of a functional preinitiation complex with RNA polymerase II and the general transcription factors. This chain is Mediator of RNA polymerase II transcription subunit 14 (rgr1), found in Emericella nidulans (strain FGSC A4 / ATCC 38163 / CBS 112.46 / NRRL 194 / M139) (Aspergillus nidulans).